The primary structure comprises 107 residues: Hydrogenase expression/formation protein HoxL (107 aa).

It belongs to the HupF/HypC family.

This is Hydrogenase expression/formation protein HoxL (hoxL) from Cupriavidus necator (strain ATCC 17699 / DSM 428 / KCTC 22496 / NCIMB 10442 / H16 / Stanier 337) (Ralstonia eutropha).